The primary structure comprises 508 residues: Heat shock 70 kDa protein 14 (508 aa).

This sequence belongs to the heat shock protein 70 family. In terms of assembly, component of ribosome-associated complex (RAC).

It localises to the cytoplasm. The protein resides in the cytosol. Functionally, component of the ribosome-associated complex (RAC), a complex involved in folding or maintaining nascent polypeptides in a folding-competent state. This is Heat shock 70 kDa protein 14 (hspa14) from Xenopus tropicalis (Western clawed frog).